The sequence spans 172 residues: Cyclin-L1 (172 aa).

The segment at 1-36 (MASGPHSTATAAAAASSAAPSAGGSSSGTTTTTTTT) is disordered. The cyclin-like stretch occupies residues 88 to 168 (ELIQAAGILL…LRGKSDQLHL (81 aa)).

Belongs to the cyclin family. Cyclin L subfamily. As to quaternary structure, interacts with POLR2A via its hyperphosphorylated C-terminal domain (CTD). Interacts with CDK11A, CDK11B, CDK12 and CDK13. May form a ternary complex with CDK11B and casein kinase II (CKII). Interacts with pre-mRNA-splicing factors, including at least SRSF1, SRSF2 and SRSF7/SLU7.

Its subcellular location is the nucleus speckle. The protein resides in the nucleus. It is found in the nucleoplasm. In terms of biological role, involved in pre-mRNA splicing. Functions in association with cyclin-dependent kinases (CDKs). May play a role in the regulation of RNA polymerase II (pol II). Inhibited by the CDK-specific inhibitor CDKN1A/p21. This Pongo abelii (Sumatran orangutan) protein is Cyclin-L1 (CCNL1).